The primary structure comprises 371 residues: Maltose/maltodextrin import ATP-binding protein MalK (371 aa).

Residues Val-4–Ile-234 form the ABC transporter domain. Gly-36–Ser-43 is an ATP binding site.

The protein belongs to the ABC transporter superfamily. Maltooligosaccharide importer (TC 3.A.1.1.1) family. As to quaternary structure, the complex is composed of two ATP-binding proteins (MalK), two transmembrane proteins (MalG and MalK) and a solute-binding protein (MalE).

Its subcellular location is the cell inner membrane. The catalysed reaction is D-maltose(out) + ATP + H2O = D-maltose(in) + ADP + phosphate + H(+). Part of the ABC transporter complex MalEFGK involved in maltose/maltodextrin import. Responsible for energy coupling to the transport system. The sequence is that of Maltose/maltodextrin import ATP-binding protein MalK from Escherichia coli O157:H7.